Consider the following 363-residue polypeptide: Chorismate synthase (363 aa).

Residues Arg-48 and Arg-54 each contribute to the NADP(+) site. Residues Arg-125–Ser-127, Asn-237–Ala-238, Gly-277, Lys-292–Ser-296, and Arg-318 each bind FMN.

This sequence belongs to the chorismate synthase family. In terms of assembly, homotetramer. It depends on FMNH2 as a cofactor.

The catalysed reaction is 5-O-(1-carboxyvinyl)-3-phosphoshikimate = chorismate + phosphate. Its pathway is metabolic intermediate biosynthesis; chorismate biosynthesis; chorismate from D-erythrose 4-phosphate and phosphoenolpyruvate: step 7/7. Functionally, catalyzes the anti-1,4-elimination of the C-3 phosphate and the C-6 proR hydrogen from 5-enolpyruvylshikimate-3-phosphate (EPSP) to yield chorismate, which is the branch point compound that serves as the starting substrate for the three terminal pathways of aromatic amino acid biosynthesis. This reaction introduces a second double bond into the aromatic ring system. This is Chorismate synthase from Ectopseudomonas mendocina (strain ymp) (Pseudomonas mendocina).